The primary structure comprises 106 residues: Large ribosomal subunit protein eL42 (106 aa).

It belongs to the eukaryotic ribosomal protein eL42 family.

The chain is Large ribosomal subunit protein eL42 (RPL44) from Kluyveromyces marxianus (Yeast).